Here is a 311-residue protein sequence, read N- to C-terminus: DNA replication terminus site-binding protein (311 aa).

It belongs to the Tus family.

It is found in the cytoplasm. Functionally, trans-acting protein required for termination of DNA replication. Binds to DNA replication terminator sequences (terA to terF) to prevent the passage of replication forks. The termination efficiency will be affected by the affinity of this protein for the terminator sequence. This is DNA replication terminus site-binding protein from Yersinia pseudotuberculosis serotype O:1b (strain IP 31758).